Reading from the N-terminus, the 529-residue chain is Peptide chain release factor 3 (529 aa).

Positions 11–280 (KKRRTFAIIS…GLVEWAPAPL (270 aa)) constitute a tr-type G domain. Residues 20-27 (SHPDAGKT), 88-92 (DTPGH), and 142-145 (NKLD) contribute to the GTP site.

Belongs to the TRAFAC class translation factor GTPase superfamily. Classic translation factor GTPase family. PrfC subfamily.

Its subcellular location is the cytoplasm. In terms of biological role, increases the formation of ribosomal termination complexes and stimulates activities of RF-1 and RF-2. It binds guanine nucleotides and has strong preference for UGA stop codons. It may interact directly with the ribosome. The stimulation of RF-1 and RF-2 is significantly reduced by GTP and GDP, but not by GMP. This chain is Peptide chain release factor 3, found in Alteromonas mediterranea (strain DSM 17117 / CIP 110805 / LMG 28347 / Deep ecotype).